Reading from the N-terminus, the 426-residue chain is Enolase (426 aa).

Glutamine 163 contributes to the (2R)-2-phosphoglycerate binding site. The Proton donor role is filled by glutamate 205. The Mg(2+) site is built by aspartate 242, glutamate 283, and aspartate 310. (2R)-2-phosphoglycerate contacts are provided by lysine 335, arginine 364, serine 365, and lysine 386. Residue lysine 335 is the Proton acceptor of the active site.

It belongs to the enolase family. Mg(2+) is required as a cofactor.

The protein localises to the cytoplasm. The protein resides in the secreted. Its subcellular location is the cell surface. The enzyme catalyses (2R)-2-phosphoglycerate = phosphoenolpyruvate + H2O. It participates in carbohydrate degradation; glycolysis; pyruvate from D-glyceraldehyde 3-phosphate: step 4/5. In terms of biological role, catalyzes the reversible conversion of 2-phosphoglycerate (2-PG) into phosphoenolpyruvate (PEP). It is essential for the degradation of carbohydrates via glycolysis. This Beutenbergia cavernae (strain ATCC BAA-8 / DSM 12333 / CCUG 43141 / JCM 11478 / NBRC 16432 / NCIMB 13614 / HKI 0122) protein is Enolase.